Reading from the N-terminus, the 714-residue chain is Developmentally-regulated protein kinase 1 (714 aa).

2 disordered regions span residues 88-122 (NNNI…NNFN) and 174-266 (CNMI…IINN). Composition is skewed to low complexity over residues 174–200 (CNMI…NNNN), 209–227 (PSSN…TTSS), and 240–266 (NFNQ…IINN). The region spanning 334–589 (FNFYGSLGSG…SCSIRNHKWF (256 aa)) is the Protein kinase domain. ATP is bound by residues 340-348 (LGSGSFGTA) and K363. D457 (proton acceptor) is an active-site residue. T488 bears the Phosphothreonine mark.

This sequence belongs to the protein kinase superfamily. AGC Ser/Thr protein kinase family.

The catalysed reaction is L-seryl-[protein] + ATP = O-phospho-L-seryl-[protein] + ADP + H(+). It catalyses the reaction L-threonyl-[protein] + ATP = O-phospho-L-threonyl-[protein] + ADP + H(+). The polypeptide is Developmentally-regulated protein kinase 1 (pkaD) (Dictyostelium discoideum (Social amoeba)).